We begin with the raw amino-acid sequence, 295 residues long: Ribosomal protein L11 methyltransferase (295 aa).

Positions 138, 161, 183, and 230 each coordinate S-adenosyl-L-methionine.

The protein belongs to the methyltransferase superfamily. PrmA family.

The protein resides in the cytoplasm. It carries out the reaction L-lysyl-[protein] + 3 S-adenosyl-L-methionine = N(6),N(6),N(6)-trimethyl-L-lysyl-[protein] + 3 S-adenosyl-L-homocysteine + 3 H(+). In terms of biological role, methylates ribosomal protein L11. In Bradyrhizobium diazoefficiens (strain JCM 10833 / BCRC 13528 / IAM 13628 / NBRC 14792 / USDA 110), this protein is Ribosomal protein L11 methyltransferase.